Here is a 281-residue protein sequence, read N- to C-terminus: Spermatogenesis-associated serine-rich protein 1 (281 aa).

The span at 1–14 shows a compositional bias: basic and acidic residues; the sequence is MEAARDAQHSDVLE. Residues 1-92 form a disordered region; the sequence is MEAARDAQHS…SSSAQANRSL (92 aa). Over residues 21-37 the composition is skewed to polar residues; sequence SRTSSHQNRRASLSSDG. At Thr53 the chain carries Phosphothreonine. Polar residues predominate over residues 54-65; the sequence is PSDTASGLGQKT. Over residues 66–85 the composition is skewed to low complexity; it reads SSTSSSSSSSSSSSPSSSSS. Ser71, Ser74, Ser77, Ser78, Ser79, and Ser91 each carry phosphoserine.

As to expression, detected in pachytene spermatocytes and round spermatids.

This chain is Spermatogenesis-associated serine-rich protein 1 (Spats1), found in Rattus norvegicus (Rat).